The chain runs to 185 residues: Large ribosomal subunit protein uL5 (185 aa).

Belongs to the universal ribosomal protein uL5 family. Part of the 50S ribosomal subunit; part of the 5S rRNA/L5/L18/L25 subcomplex. Contacts the 5S rRNA and the P site tRNA. Forms a bridge to the 30S subunit in the 70S ribosome.

In terms of biological role, this is one of the proteins that bind and probably mediate the attachment of the 5S RNA into the large ribosomal subunit, where it forms part of the central protuberance. In the 70S ribosome it contacts protein S13 of the 30S subunit (bridge B1b), connecting the 2 subunits; this bridge is implicated in subunit movement. Contacts the P site tRNA; the 5S rRNA and some of its associated proteins might help stabilize positioning of ribosome-bound tRNAs. The sequence is that of Large ribosomal subunit protein uL5 from Rhodopseudomonas palustris (strain BisA53).